A 217-amino-acid polypeptide reads, in one-letter code: MPPKGNKQAIADRRSQKQQKLQEQWDEEEESWDDSQAEEVSDEEEMESWESLDEELEDKPPKDEEEEIIASAAAPSSKEPARSQPPTGKVGPSPPRPGLLKASRRWDTVSIAGSPPAPVAPTKRSEKTTRPRKEKTSAIATRQDTPVAQELRKRIFPTLYAIFQQSRGQQLELKVKNRSLRSLTRSCLYHRREDQLQRTLEDAEALFNKYCSVSLKD.

The interval 1 to 142 (MPPKGNKQAI…KEKTSAIATR (142 aa)) is disordered. Over residues 24 to 68 (QWDEEEESWDDSQAEEVSDEEEMESWESLDEELEDKPPKDEEEEI) the composition is skewed to acidic residues. Residues 69–78 (IASAAAPSSK) are compositionally biased toward low complexity. Residues 123–136 (KRSEKTTRPRKEKT) show a composition bias toward basic and acidic residues. A necessary for nuclear subcellular location region spans residues 160 to 187 (YAIFQQSRGQQLELKVKNRSLRSLTRSC). The RS-repeat; required for splicing enhancer activity stretch occupies residues 166-186 (SRGQQLELKVKNRSLRSLTRS).

The protein belongs to the adenoviridae splicing factor family. In terms of assembly, homooligomer. Interacts with DBP; this interaction occurs at a unique vertex during genome packaging. Interacts with IVa2; this interaction occurs at a unique vertex during genome packaging and seems to potentiate IVa2 and 33K oligomerization. Post-translationally, phosphorylated in vitro by human PKA and PRKDC. PRKDC inhibits, whereas PKA activates the splicing factor.

It is found in the host nucleus. In terms of biological role, promotes alternative splicing of late transcripts by promoting splicing at weak 3' splice sites. Required for the temporal activation of major late pre-mRNA splicing at late times of infection. Induces the splicing and expression of the late capsid vertex protein. Functionally, probably functions as the small terminase that is part of the molecular motor that translocates genomic DNA in empty capsid during DNA packaging. This motor is located at a unique vertex and comprises at least the IVa2 ATPase, the small terminase 33K and probably a portal. Forms a ring-like structure of about 17 nm in which genomic DNA is translocated into the capsid. Stimulates IVa2 ATPase activity in the presence of the viral genome. Once the DNA is packaged, the terminase detaches: the 33K protein is present in the empty particles, but not in the mature virions. Also involved in virion assembly. In Human adenovirus F serotype 41 (HAdV-41), this protein is Protein 33K.